The sequence spans 466 residues: Asparagine--tRNA ligase (466 aa).

Belongs to the class-II aminoacyl-tRNA synthetase family. Homodimer.

Its subcellular location is the cytoplasm. It carries out the reaction tRNA(Asn) + L-asparagine + ATP = L-asparaginyl-tRNA(Asn) + AMP + diphosphate + H(+). In Salmonella paratyphi A (strain ATCC 9150 / SARB42), this protein is Asparagine--tRNA ligase.